A 97-amino-acid polypeptide reads, in one-letter code: Coiled-coil domain-containing protein 167 (97 aa).

Residues 10–79 (GVALEIDGLE…LRQENRKNML (70 aa)) are a coiled coil. The helical transmembrane segment at 77-97 (NMLLSVAIFLLLTVIYAYWAL) threads the bilayer.

It is found in the membrane. In Bos taurus (Bovine), this protein is Coiled-coil domain-containing protein 167 (CCDC167).